The primary structure comprises 267 residues: RWD domain-containing protein 3 (267 aa).

The region spanning 7–114 (QELSALAAIF…LWTQQNLRHI (108 aa)) is the RWD domain. 2 interaction with UBE2I/UBC9 regions span residues 13–15 (AAI) and 100–102 (VHE).

Interacts with UBE2I/UBC9, NFKBIA, HIF1A and NCOA2.

It is found in the nucleus. The protein resides in the cytoplasm. Its function is as follows. Enhancer of SUMO conjugation. Via its interaction with UBE2I/UBC9, increases SUMO conjugation to proteins by promoting the binding of E1 and E2 enzymes, thioester linkage between SUMO and UBE2I/UBC9 and transfer of SUMO to specific target proteins which include HIF1A, PIAS, NFKBIA, NR3C1 and TOP1. Positively regulates the NF-kappa-B signaling pathway by enhancing the sumoylation of NF-kappa-B inhibitor alpha (NFKBIA), promoting its stabilization which consequently leads to an increased inhibition of NF-kappa-B transcriptional activity. Negatively regulates the hypoxia-inducible factor-1 alpha (HIF1A) signaling pathway by increasing the sumoylation of HIF1A, promoting its stabilization, transcriptional activity and the expression of its target gene VEGFA during hypoxia. Has no effect on ubiquitination. The sequence is that of RWD domain-containing protein 3 (Rwdd3) from Rattus norvegicus (Rat).